The sequence spans 173 residues: Nanos homolog 3 (173 aa).

A disordered region spans residues 23 to 51 (KEGPETRLSPQPEPEPMLEPDQKRSLESS). A Nanos-type zinc finger spans residues 57-111 (LCSFCKHNGESRAIYQSHVLKDEAGRVLCPILRDYVCPQCGATRERAHTRRFCPL). Zn(2+) contacts are provided by Cys-58, Cys-61, His-74, Cys-85, Cys-93, Cys-96, His-104, and Cys-109. 2 short sequence motifs (C2HC) span residues 58 to 85 (CSFCKHNGESRAIYQSHVLKDEAGRVLC) and 93 to 109 (CPQCGATRERAHTRRFC). Positions 123–173 (TTRNSAGKKLVRPDKAKTQDTGHRRGGGGGAGFRGAGKSEPSPSCSPSMST) are disordered. Residues 133–145 (VRPDKAKTQDTGH) are compositionally biased toward basic and acidic residues. The span at 161–173 (SEPSPSCSPSMST) shows a compositional bias: low complexity.

Belongs to the nanos family. As to quaternary structure, binds mRNA from germ cells. Interacts with PUM2. Ovary, testis and brain (at protein level). In the ovaries, expressed during multiple stages of oogenesis, including primordial, primary, secondary and antral follicles with the highest expression in the oocytes. In the testis, expressed in germ cells, type A spermatogonia (SA), primary spermatocytes (S1), round spermatids (S3) and elongated spermatids.

The protein localises to the nucleus. The protein resides in the cytoplasm. Its subcellular location is the stress granule. It is found in the P-body. Functionally, plays a role in the maintenance of the undifferentiated state of germ cells regulating the spermatogonia cell cycle and inducing a prolonged transit in G1 phase. Affects cell proliferation probably by repressing translation of specific mRNAs. Maintains the germ cell lineage by suppressing both Bax-dependent and -independent apoptotic pathways. Essential in the early stage embryo to protect the migrating primordial germ cells (PGCs) from apoptosis. This chain is Nanos homolog 3 (NANOS3), found in Homo sapiens (Human).